We begin with the raw amino-acid sequence, 421 residues long: Serine--tRNA ligase (421 aa).

230–232 is a binding site for L-serine; sequence TAE. 259–261 serves as a coordination point for ATP; the sequence is RRE. Position 282 (glutamate 282) interacts with L-serine. Position 346-349 (346-349) interacts with ATP; that stretch reads EISS. Serine 380 is a binding site for L-serine.

Belongs to the class-II aminoacyl-tRNA synthetase family. Type-1 seryl-tRNA synthetase subfamily. As to quaternary structure, homodimer. The tRNA molecule binds across the dimer.

It localises to the cytoplasm. The enzyme catalyses tRNA(Ser) + L-serine + ATP = L-seryl-tRNA(Ser) + AMP + diphosphate + H(+). The catalysed reaction is tRNA(Sec) + L-serine + ATP = L-seryl-tRNA(Sec) + AMP + diphosphate + H(+). It functions in the pathway aminoacyl-tRNA biosynthesis; selenocysteinyl-tRNA(Sec) biosynthesis; L-seryl-tRNA(Sec) from L-serine and tRNA(Sec): step 1/1. Functionally, catalyzes the attachment of serine to tRNA(Ser). Is also able to aminoacylate tRNA(Sec) with serine, to form the misacylated tRNA L-seryl-tRNA(Sec), which will be further converted into selenocysteinyl-tRNA(Sec). The protein is Serine--tRNA ligase of Methanosarcina acetivorans (strain ATCC 35395 / DSM 2834 / JCM 12185 / C2A).